The chain runs to 365 residues: MEVVEILKELLKFKSITPDDDGAMNFINMFMDGFDADFVDVNGIKNLILTKKFGDGVHLCFAGHIDVVPAGDGWDSDPFEPELKDGFVYARGAQDMKSGVAAFLCACKDATKFNGTLSIILTSDEEGDGIYGTLEALKFLKSRGNLPDFALVAEPTSSSTFGDTIKIGRRGSVNGVVTINGVQGHAAYPEKCVNPVHQLASVFSDFAGYELDSGSKYFGASKIVITDIRGGMEVVNVTPKSVKIMFNVRNSELTSCEDIKRYTEHIFNGFDFTLSLKESSKPFLTDESSKIVIQAQKSIENICKISPDLSTSGGTSDARYFAAFGVPVVEFGVVNDRIHAINERVLQSEVESLYLVFKDLIENFE.

Histidine 64 is a binding site for Zn(2+). Residue aspartate 66 is part of the active site. Position 95 (aspartate 95) interacts with Zn(2+). The active-site Proton acceptor is glutamate 125. Positions 126, 154, and 339 each coordinate Zn(2+).

This sequence belongs to the peptidase M20A family. DapE subfamily. Homodimer. Requires Zn(2+) as cofactor. It depends on Co(2+) as a cofactor.

It catalyses the reaction N-succinyl-(2S,6S)-2,6-diaminopimelate + H2O = (2S,6S)-2,6-diaminopimelate + succinate. Its pathway is amino-acid biosynthesis; L-lysine biosynthesis via DAP pathway; LL-2,6-diaminopimelate from (S)-tetrahydrodipicolinate (succinylase route): step 3/3. Catalyzes the hydrolysis of N-succinyl-L,L-diaminopimelic acid (SDAP), forming succinate and LL-2,6-diaminopimelate (DAP), an intermediate involved in the bacterial biosynthesis of lysine and meso-diaminopimelic acid, an essential component of bacterial cell walls. The chain is Succinyl-diaminopimelate desuccinylase from Campylobacter fetus subsp. fetus (strain 82-40).